A 207-amino-acid polypeptide reads, in one-letter code: Charged multivesicular body protein 3 (207 aa).

Residues 174–207 (QVSSAPLETHQQEEVVQEKQEDSELLDRLKALKS) are disordered. Positions 183–207 (HQQEEVVQEKQEDSELLDRLKALKS) form a coiled coil. Residues 183–207 (HQQEEVVQEKQEDSELLDRLKALKS) show a composition bias toward basic and acidic residues.

The protein belongs to the SNF7 family. Probable core component of the endosomal sorting required for transport complex III (ESCRT-III).

Its subcellular location is the endosome membrane. Its function is as follows. Probable core component of the endosomal sorting required for transport complex III (ESCRT-III) which is involved in multivesicular bodies (MVBs) formation and sorting of endosomal cargo proteins into MVBs. MVBs contain intraluminal vesicles (ILVs) that are generated by invagination and scission from the limiting membrane of the endosome and are delivered to lysosomes enabling degradation of membrane proteins. The sequence is that of Charged multivesicular body protein 3 (chmp3) from Dictyostelium discoideum (Social amoeba).